The following is a 67-amino-acid chain: Large ribosomal subunit protein uL29 (67 aa).

The protein belongs to the universal ribosomal protein uL29 family.

This is Large ribosomal subunit protein uL29 from Wolbachia pipientis wMel.